Here is a 316-residue protein sequence, read N- to C-terminus: Phosphate acyltransferase (316 aa).

It belongs to the PlsX family. In terms of assembly, homodimer. Probably interacts with PlsY.

It localises to the cytoplasm. It carries out the reaction a fatty acyl-[ACP] + phosphate = an acyl phosphate + holo-[ACP]. Its pathway is lipid metabolism; phospholipid metabolism. Functionally, catalyzes the reversible formation of acyl-phosphate (acyl-PO(4)) from acyl-[acyl-carrier-protein] (acyl-ACP). This enzyme utilizes acyl-ACP as fatty acyl donor, but not acyl-CoA. The chain is Phosphate acyltransferase from Chlamydia abortus (strain DSM 27085 / S26/3) (Chlamydophila abortus).